A 135-amino-acid chain; its full sequence is Inner membrane protein YgfX (135 aa).

Over 1-11 (MVLWQSDLRVS) the chain is Cytoplasmic. A not required to inhibit FtsZ or MreB polymerization region spans residues 1–96 (MVLWQSDLRV…APWMIKSGMM (96 aa)). Residues 12–32 (WRAQWLSLLIHGLVAAVILLM) traverse the membrane as a helical segment. The Periplasmic portion of the chain corresponds to 33–37 (PWPLS). The chain crosses the membrane as a helical span at residues 38-54 (YTPLWMVLLSLVVFDCV). The Cytoplasmic portion of the chain corresponds to 55–135 (RSQRRINARQ…RILLQQETQR (81 aa)).

In terms of assembly, interacts with MreB and FtsZ; interaction with the latter requires FtsZ residues 33-49.

The protein localises to the cell inner membrane. In terms of biological role, a probable inner membrane protein. Has been shown not to be a toxin, no effects on growth are seen in LB or minimal medium up to 6 or 21 hours (respectively) after induction of expression. Interacts with cytoskeletal proteins FtsZ and MreB; inhibits FtsZ GTP-dependent polymerization as well as MreB ATP-dependent polymerization. Restores production of prodigiosin antibiotic (Pig) in Serratia strains with deletions of sdhE-ygfX; overexpression of this protein and CptB also restores Pig production to a slightly lesser extent in Serratia. The polypeptide is Inner membrane protein YgfX (Escherichia coli (strain K12)).